Reading from the N-terminus, the 450-residue chain is MNQTETTPIRVRKNWKTSEIETLFDEQAGRIDPRIYTDEDLYQLELERVFARSWLLLGHETHIRKPGDYFTTYMGEDPVVVVRQKDASIAVFLNQCRHRGMRICRSDAGNAKAFTCSYHGWAYDTAGNLINVPYEAESFACLDKKEWSPLKARVETYKGLIFANWDENAIDLDTYLGEAKFYMDHMLDRTEAGTEVIPGIQKWVIPCNWKFAAEQFCSDMYHAGTTAHLSGIIAGLPEDLELADLAPPKFGKQYRASWGGHGSGFYIGDPNMMLAMMGPKVTSYLTEGPAAEKAAERLGSIERGTKIMLEHMTVFPTCSFLPGVNTIRTWHPRGPNEVEVWAFTVVDADAPDDIKEEFRRQTLRTFSAGGVFEQDDGENWVEIQHILRGHKARSRPFNAEMSMGQTVDNDPIYPGRISNNVYSEEAARGLYAHWLKMMTSPDWEALKATR.

The 108-residue stretch at 56-163 (LLGHETHIRK…VETYKGLIFA (108 aa)) folds into the Rieske domain. 4 residues coordinate [2Fe-2S] cluster: Cys96, His98, Cys116, and His119. His222 and His228 together coordinate Fe cation.

This sequence belongs to the bacterial ring-hydroxylating dioxygenase alpha subunit family. In terms of assembly, this dioxygenase system consists of four proteins: the two subunits of the hydroxylase component (BedC1 and BedC2), a ferredoxin (BedB) and a ferredoxin reductase (BedA). It depends on [2Fe-2S] cluster as a cofactor. Fe cation serves as cofactor.

It carries out the reaction benzene + NADH + O2 + H(+) = cis-1,2-dihydrobenzene-1,2-diol + NAD(+). It participates in aromatic compound metabolism; benzene degradation; catechol from benzene: step 1/2. This is Benzene 1,2-dioxygenase subunit alpha (bedC1) from Pseudomonas putida (Arthrobacter siderocapsulatus).